Consider the following 398-residue polypeptide: MSASNGEIVQRIESLLASAKKLQGDDQYGRFGLLKEIDLLYQDVEPPINTFFKQWTSLTFFSCIDIAIKLGLFEHMKGRESITAKELGALVNVDDDVIARVMRVLVASRFVASKGEDAYAHTHKSLVYVKGEHTAVDSFNLISLLAVSYITIPEYLKTRSADELVDIRKTPYACAYGMEGKTFYEVLSTNPDHLDTFNRSMSEPGPEWGMFPFESLRENVLAEPERPFVVDIGGGKGQALLRIQEETGKVFGTSSQLILQERPDVLEQINQDDIAGITKMPYDFHTKQPVKDAHVYFFSQIIHNYPDHVCQDILKQAAGAMGPSSRLLIVEAVLPAQTDVGGDMGAYLIDFVGLAMGGKERTEKEFATLLGTVGLELVKVWHGKARHHAIVEARLKRA.

Residues 233–234 (GG), Glu261, and 283–284 (DF) contribute to the S-adenosyl-L-methionine site. The Proton acceptor role is filled by His303.

The protein belongs to the class I-like SAM-binding methyltransferase superfamily. Cation-independent O-methyltransferase family.

The protein operates within secondary metabolite biosynthesis. Functionally, O-methyltransferase; part of the gene cluster that mediates the biosynthesis of hypothemycin, a resorcylic acid lactone (RAL) that irreversibly inhibits a subset of protein kinases with a conserved cysteine in the ATP binding site such as human ERK2. The first step is performed by both PKSs hmp3 and hmp8 and leads to the production of 7',8'-dehydrozearalenol (DHZ). The highly reducing PKS hpm8 synthesizes the reduced hexaketide (7S,11S,2E,8E)-7,11-dihydroxy-dodeca-2,8-dienoate, which is transferred downstream to the non-reducing PKS hpm3. Hpm3 then extends the reduced hexaketide to a nonaketide, after which regioselective cyclization and macrolactonization affords DHZ. The next step is the conversion of DHZ into aigialomycin C and is performed by the O-methyltransferase hmp5, the FAD-binding monooxygenase hmp7, and the cytochrome P450 monooxygenase hmp1. The wide substrate tolerance of the hmp5 and hmp7 implies that the reactions from DHZ to aigialomycin C can occur in any order. The steps from aigialomycin C to hypothemycin are less well established. The FAD-linked oxidoreductase hmp9 presumably catalyzes oxidation of the C-6' hydroxyl to a ketone. The timing of this oxidation is important, since the resulting enone functional group is a Michael acceptor that can react spontaneously with glutathione, an abundant metabolite in fungal cells. The glutathione S-transferase hmp2 catalyzes cis-trans isomerization of the 7',8' double bond with equilibrium favoring the trans isomer. The hpm6-encoded transporter might preferentially pump hypothemycin out of the cell relative to the trans isomer aigialomycin A. The cis-to-trans isomerization may be coupled with C-4' hydroxylation, since all known hypothemycin analogs containing the enone functional group also have hydroxyl groups at both C-4' and C-5'. This is O-methyltransferase hmp5 from Hypomyces subiculosus (Nectria subiculosa).